A 353-amino-acid chain; its full sequence is DNA polymerase IV (353 aa).

Residues 14–198 (IIHIDMDAFF…MDISKFHGVG (185 aa)) form the UmuC domain. 2 residues coordinate Mg(2+): D18 and D116. E117 is a catalytic residue.

The protein belongs to the DNA polymerase type-Y family. Monomer. It depends on Mg(2+) as a cofactor.

Its subcellular location is the cytoplasm. It carries out the reaction DNA(n) + a 2'-deoxyribonucleoside 5'-triphosphate = DNA(n+1) + diphosphate. Poorly processive, error-prone DNA polymerase involved in untargeted mutagenesis. Copies undamaged DNA at stalled replication forks, which arise in vivo from mismatched or misaligned primer ends. These misaligned primers can be extended by PolIV. Exhibits no 3'-5' exonuclease (proofreading) activity. May be involved in translesional synthesis, in conjunction with the beta clamp from PolIII. The protein is DNA polymerase IV of Streptococcus pneumoniae serotype 4 (strain ATCC BAA-334 / TIGR4).